Reading from the N-terminus, the 461-residue chain is Ornithine decarboxylase (461 aa).

K69 is modified (N6-(pyridoxal phosphate)lysine). Residues S200, G237, and 274-277 each bind pyridoxal 5'-phosphate; that span reads EPGR. S303 is modified (phosphoserine; by CK2). Substrate is bound at residue 331 to 332; that stretch reads YD. The active-site Proton donor; shared with dimeric partner is the C360. C360 is modified (S-nitrosocysteine). Position 361 (D361) interacts with substrate. Y389 provides a ligand contact to pyridoxal 5'-phosphate.

It belongs to the Orn/Lys/Arg decarboxylase class-II family. As to quaternary structure, homodimer. Only the dimer is catalytically active, as the active sites are constructed of residues from both monomers. Requires pyridoxal 5'-phosphate as cofactor.

It carries out the reaction L-ornithine + H(+) = putrescine + CO2. Its pathway is amine and polyamine biosynthesis; putrescine biosynthesis via L-ornithine pathway; putrescine from L-ornithine: step 1/1. With respect to regulation, inhibited by antizymes (AZs) OAZ1, OAZ2 and OAZ3 in response to polyamine levels. AZs inhibit the assembly of the functional homodimer by binding to ODC monomers. Additionally, OAZ1 targets ODC monomers for ubiquitin-independent proteolytic destruction by the 26S proteasome. Catalyzes the first and rate-limiting step of polyamine biosynthesis that converts ornithine into putrescine, which is the precursor for the polyamines, spermidine and spermine. Polyamines are essential for cell proliferation and are implicated in cellular processes, ranging from DNA replication to apoptosis. In Mus pahari (Gairdner's shrew-mouse), this protein is Ornithine decarboxylase (Odc1).